Consider the following 472-residue polypeptide: Chromosomal replication initiator protein DnaA (472 aa).

The tract at residues 1 to 80 is domain I, interacts with DnaA modulators; that stretch reads MDTKQIWFTT…YQVNVRVIIS (80 aa). A domain II region spans residues 80-130; that stretch reads SSATPAPSEPVAVTPSEPSPTTEVAEPSFASFNQAAPMLNQLPLGDPNRSS. Residues 131–347 are domain III, AAA+ region; the sequence is VLNPRYTFSS…GCLNRVIAYA (217 aa). ATP-binding residues include G175, G177, K178, and T179. The interval 348-472 is domain IV, binds dsDNA; sequence NLNRTPVTVE…RQRLYGENAR (125 aa).

Belongs to the DnaA family. In terms of assembly, oligomerizes as a right-handed, spiral filament on DNA at oriC.

Its subcellular location is the cytoplasm. In terms of biological role, plays an essential role in the initiation and regulation of chromosomal replication. ATP-DnaA binds to the origin of replication (oriC) to initiate formation of the DNA replication initiation complex once per cell cycle. Binds the DnaA box (a 9 base pair repeat at the origin) and separates the double-stranded (ds)DNA. Forms a right-handed helical filament on oriC DNA; dsDNA binds to the exterior of the filament while single-stranded (ss)DNA is stabiized in the filament's interior. The ATP-DnaA-oriC complex binds and stabilizes one strand of the AT-rich DNA unwinding element (DUE), permitting loading of DNA polymerase. After initiation quickly degrades to an ADP-DnaA complex that is not apt for DNA replication. Binds acidic phospholipids. This Herpetosiphon aurantiacus (strain ATCC 23779 / DSM 785 / 114-95) protein is Chromosomal replication initiator protein DnaA.